We begin with the raw amino-acid sequence, 119 residues long: Fluoride-specific ion channel FluC 2 (119 aa).

Residues 46–66 (FALGLLTFAGVTGDAALLVGV) form a helical membrane-spanning segment. Na(+) is bound by residues glycine 70 and threonine 73. Residues 96-116 (LNAVGNLACALVGIGLAWGIV) form a helical membrane-spanning segment.

The protein belongs to the fluoride channel Fluc/FEX (TC 1.A.43) family.

It is found in the cell membrane. It catalyses the reaction fluoride(in) = fluoride(out). Its activity is regulated as follows. Na(+) is not transported, but it plays an essential structural role and its presence is essential for fluoride channel function. Fluoride-specific ion channel. Important for reducing fluoride concentration in the cell, thus reducing its toxicity. This is Fluoride-specific ion channel FluC 2 from Haloarcula marismortui (strain ATCC 43049 / DSM 3752 / JCM 8966 / VKM B-1809) (Halobacterium marismortui).